We begin with the raw amino-acid sequence, 100 residues long: Small ribosomal subunit protein uS14c (100 aa).

The protein belongs to the universal ribosomal protein uS14 family. In terms of assembly, part of the 30S ribosomal subunit.

Its subcellular location is the plastid. The protein localises to the chloroplast. In terms of biological role, binds 16S rRNA, required for the assembly of 30S particles. This chain is Small ribosomal subunit protein uS14c, found in Helianthus annuus (Common sunflower).